The primary structure comprises 51 residues: Putative inactivation escape 1 protein (51 aa).

In terms of tissue distribution, highly expressed in pancreas, heart and liver followed by brain, placenta, lung, skeletal muscle and kidney. Mostly expressed in females.

This is Putative inactivation escape 1 protein (INE1) from Homo sapiens (Human).